The chain runs to 499 residues: Probable cytosol aminopeptidase (499 aa).

Mn(2+) is bound by residues Lys271 and Asp276. The active site involves Lys283. Mn(2+)-binding residues include Asp294, Asp353, and Glu355. Arg357 is a catalytic residue.

This sequence belongs to the peptidase M17 family. Mn(2+) is required as a cofactor.

Its subcellular location is the cytoplasm. It catalyses the reaction Release of an N-terminal amino acid, Xaa-|-Yaa-, in which Xaa is preferably Leu, but may be other amino acids including Pro although not Arg or Lys, and Yaa may be Pro. Amino acid amides and methyl esters are also readily hydrolyzed, but rates on arylamides are exceedingly low.. It carries out the reaction Release of an N-terminal amino acid, preferentially leucine, but not glutamic or aspartic acids.. Presumably involved in the processing and regular turnover of intracellular proteins. Catalyzes the removal of unsubstituted N-terminal amino acids from various peptides. The protein is Probable cytosol aminopeptidase of Bordetella bronchiseptica (strain ATCC BAA-588 / NCTC 13252 / RB50) (Alcaligenes bronchisepticus).